Reading from the N-terminus, the 291-residue chain is Lipoyl synthase 1 (291 aa).

[4Fe-4S] cluster-binding residues include cysteine 34, cysteine 39, cysteine 45, cysteine 60, cysteine 64, cysteine 67, and serine 274. Residues phenylalanine 46–leucine 263 enclose the Radical SAM core domain.

The protein belongs to the radical SAM superfamily. Lipoyl synthase family. It depends on [4Fe-4S] cluster as a cofactor.

The protein localises to the cytoplasm. The catalysed reaction is [[Fe-S] cluster scaffold protein carrying a second [4Fe-4S](2+) cluster] + N(6)-octanoyl-L-lysyl-[protein] + 2 oxidized [2Fe-2S]-[ferredoxin] + 2 S-adenosyl-L-methionine + 4 H(+) = [[Fe-S] cluster scaffold protein] + N(6)-[(R)-dihydrolipoyl]-L-lysyl-[protein] + 4 Fe(3+) + 2 hydrogen sulfide + 2 5'-deoxyadenosine + 2 L-methionine + 2 reduced [2Fe-2S]-[ferredoxin]. Its pathway is protein modification; protein lipoylation via endogenous pathway; protein N(6)-(lipoyl)lysine from octanoyl-[acyl-carrier-protein]: step 2/2. Its function is as follows. Catalyzes the radical-mediated insertion of two sulfur atoms into the C-6 and C-8 positions of the octanoyl moiety bound to the lipoyl domains of lipoate-dependent enzymes, thereby converting the octanoylated domains into lipoylated derivatives. This chain is Lipoyl synthase 1, found in Nostoc sp. (strain PCC 7120 / SAG 25.82 / UTEX 2576).